A 341-amino-acid polypeptide reads, in one-letter code: HTH-type transcriptional repressor PurR (341 aa).

The HTH lacI-type domain occupies 2 to 56; that stretch reads ATIKDVAKHAGVSTTTVSHVINKTRFVAENTKAAVWAAIKELHYSPSAVARSLKV. The H-T-H motif DNA-binding region spans 4–23; the sequence is IKDVAKHAGVSTTTVSHVIN. A DNA-binding region spans residues 48 to 56; that stretch reads SAVARSLKV. Positions 73, 190, 192, 221, and 275 each coordinate hypoxanthine.

In terms of assembly, homodimer.

The protein operates within purine metabolism; purine nucleotide biosynthesis [regulation]. Its function is as follows. Is the main repressor of the genes involved in the de novo synthesis of purine nucleotides, regulating purB, purC, purEK, purF, purHD, purL, purMN and guaBA expression. PurR is allosterically activated to bind its cognate DNA by binding the purine corepressors, hypoxanthine or guanine, thereby effecting transcription repression. This chain is HTH-type transcriptional repressor PurR, found in Yersinia enterocolitica serotype O:8 / biotype 1B (strain NCTC 13174 / 8081).